The sequence spans 224 residues: Non-structural protein V (224 aa).

Disordered stretches follow at residues 57-98 (IQYP…EPLF) and 144-172 (RTST…GHRR). Zn(2+) contacts are provided by histidine 170, cysteine 189, cysteine 193, cysteine 205, cysteine 207, cysteine 210, cysteine 214, and cysteine 217.

This sequence belongs to the paramyxoviruses V protein family. Interacts with host IFIH1/MDA5 and DHX58/LGP2. Forms with host DDB1, CUL4A, STAT1, STAT2 and STAT3 the mumps virus V-dependent complex (VDC).

It is found in the virion. The protein localises to the host cytoplasm. Its function is as follows. Plays an essential role in the inhibition of host immune response. Prevents the establishment of cellular antiviral state by blocking interferon-alpha/beta (IFN-alpha/beta) production and signaling pathway. Interacts with host IFIH1/MDA5 and DHX58/LGP2 to inhibit the transduction pathway involved in the activation of IFN-beta promoter, thus protecting the virus against cell antiviral state. Blocks the type I and II interferon signaling pathways by interacting with host STAT1, STAT2 and STAT3, and mediating their ubiquitination and subsequent proteasomal degradation. This Mumps virus genotype N (strain L-Zagreb vaccine) (MuV) protein is Non-structural protein V.